We begin with the raw amino-acid sequence, 396 residues long: Putative protein IntB (396 aa).

Residues 71-151 (RTFKEVAIEW…RTTAIMRYAV (81 aa)) form the Core-binding (CB) domain. A Tyr recombinase domain is found at 174-367 (QHRPALELKR…EHLEERRLML (194 aa)). Active-site residues include arginine 213, lysine 252, histidine 316, arginine 319, and histidine 343. Tyrosine 353 functions as the O-(3'-phospho-DNA)-tyrosine intermediate in the catalytic mechanism.

This sequence belongs to the 'phage' integrase family.

This chain is Putative protein IntB (intB), found in Escherichia coli (strain K12).